Reading from the N-terminus, the 298-residue chain is Protein OS-9 homolog (298 aa).

The first 25 residues, 1–25 (MGLAGGARVVLFVVAAAAAAALTAA), serve as a signal peptide directing secretion. The N-linked (GlcNAc...) asparagine glycan is linked to asparagine 95. One can recognise an MRH domain in the interval 121-246 (DQCFYRHEGW…TVQSPMLCKN (126 aa)). Residues cysteine 123 and cysteine 136 are joined by a disulfide bond. The a mannooligosaccharide derivative site is built by tryptophan 130, tryptophan 131, and glutamine 143. N-linked (GlcNAc...) asparagine glycosylation is found at asparagine 171 and asparagine 197. Cystine bridges form between cysteine 201–cysteine 232 and cysteine 216–cysteine 244. Aspartate 202, arginine 208, glutamate 228, and tyrosine 234 together coordinate a mannooligosaccharide derivative.

This sequence belongs to the OS-9 family. As to quaternary structure, interacts with HRD3.

The protein resides in the endoplasmic reticulum. Functionally, lectin which functions in endoplasmic reticulum (ER) quality control and ER-associated degradation (ERAD). May bind terminally misfolded non-glycosylated proteins as well as improperly folded glycoproteins, retain them in the ER, and possibly transfer them to the ubiquitination machinery and promote their degradation. The polypeptide is Protein OS-9 homolog (Oryza sativa subsp. japonica (Rice)).